We begin with the raw amino-acid sequence, 228 residues long: E3 ubiquitin-protein ligase RNF114 (228 aa).

Residues 29 to 68 (CPVCLEVYEKPVQVPCGHVFCSACLQECLKPKKPVCGVCR) form an RING-type zinc finger. Zn(2+) is bound by residues Cys-91 and Cys-94. The C2HC RNF-type zinc-finger motif lies at 91 to 110 (CHGCRKNFFLSKIRAHVATC). Lys-102 carries the N6-acetyllysine modification. Residues His-106 and Cys-110 each coordinate Zn(2+). N6-acetyllysine is present on Lys-112.

In terms of assembly, interacts with XAF1, the interaction increases XAF1 stability and proapoptotic effects, and may regulate IFN signaling. Autoubiquitinated. Polyubiquitinated in the presence of E2 enzymes UBE2D1, UBE2D2 and UBE2D3, but only monoubiquitinated in the presence of UBE2E1.

Its subcellular location is the cytoplasm. The protein localises to the nucleus. The enzyme catalyses S-ubiquitinyl-[E2 ubiquitin-conjugating enzyme]-L-cysteine + [acceptor protein]-L-lysine = [E2 ubiquitin-conjugating enzyme]-L-cysteine + N(6)-ubiquitinyl-[acceptor protein]-L-lysine.. The protein operates within protein modification; protein ubiquitination. E3 ubiquitin-protein ligase that promotes the ubiquitination of various substrates. In turn, participates in the regulation of many biological processes including cell cycle, apoptosis, osteoclastogenesis as well as innate or adaptive immunity. Acts as negative regulator of NF-kappa-B-dependent transcription by promoting the ubiquitination and stabilization of the NF-kappa-B inhibitor TNFAIP3. May promote the ubiquitination of TRAF6 as well. Also acts as a negative regulator of T-cell activation. Inhibits cellular dsRNA responses and interferon production by targeting MAVS component for proteasomal degradation. Ubiquitinates the CDK inhibitor CDKN1A leading to its degradationand probably also CDKN1B and CDKN1C. This activity stimulates cell cycle G1-to-S phase transition and suppresses cellular senescence. May play a role in spermatogenesis. Inhibits classical swine fever virus replication by mediating 'K27'-linked ubiquitination of viral NS4B and inducing its degradation via the proteasome. The protein is E3 ubiquitin-protein ligase RNF114 (RNF114) of Sus scrofa (Pig).